Reading from the N-terminus, the 304-residue chain is tRNA dimethylallyltransferase (304 aa).

2–9 lines the ATP pocket; it reads GPTASGKT. 4 to 9 serves as a coordination point for substrate; that stretch reads TASGKT. 4 interaction with substrate tRNA regions span residues 27-30, 151-155, 232-237, and 265-272; these read DSAL, QRINR, RCVGYR, and KRQITWLR.

This sequence belongs to the IPP transferase family. As to quaternary structure, monomer. Mg(2+) is required as a cofactor.

It carries out the reaction adenosine(37) in tRNA + dimethylallyl diphosphate = N(6)-dimethylallyladenosine(37) in tRNA + diphosphate. Its function is as follows. Catalyzes the transfer of a dimethylallyl group onto the adenine at position 37 in tRNAs that read codons beginning with uridine, leading to the formation of N6-(dimethylallyl)adenosine (i(6)A). This chain is tRNA dimethylallyltransferase, found in Actinobacillus pleuropneumoniae serotype 5b (strain L20).